A 345-amino-acid chain; its full sequence is MSLTLDDFDYLLPPELIAQAPLAERCASRLLVLDGERLDDRGFCDLPELVQPGDLLVFNDTRVIHARLYGTKETGGHIEVLIERAIGPHEALAQVRASKSPRAGSRLRLADAFDVTVLGRVGEFFHLRFPDSHDVLDLLEHHGKLPLPPYIDRSADEHDESRYQTVYARERGSVAAPTAGLHFDQPMLAELAKKGVHGAWLTLHVGAGTFQPVRVNDLGEHRMHRERYVIPQETVAAIAATRAAGRRVIAVGTTSLRALEGAAQDGPLEAGTGETELFILPGYRFQVVDALITNFHLPKSTLLMLVSAFAGLEPMRRAYTHAVGHSYRFFSYGDAMFITHRNDAI.

The protein belongs to the QueA family. As to quaternary structure, monomer.

The protein resides in the cytoplasm. The enzyme catalyses 7-aminomethyl-7-carbaguanosine(34) in tRNA + S-adenosyl-L-methionine = epoxyqueuosine(34) in tRNA + adenine + L-methionine + 2 H(+). The protein operates within tRNA modification; tRNA-queuosine biosynthesis. Transfers and isomerizes the ribose moiety from AdoMet to the 7-aminomethyl group of 7-deazaguanine (preQ1-tRNA) to give epoxyqueuosine (oQ-tRNA). The sequence is that of S-adenosylmethionine:tRNA ribosyltransferase-isomerase from Aromatoleum aromaticum (strain DSM 19018 / LMG 30748 / EbN1) (Azoarcus sp. (strain EbN1)).